We begin with the raw amino-acid sequence, 379 residues long: Succinyl-diaminopimelate desuccinylase (379 aa).

Zn(2+) is bound at residue His68. Asp70 is an active-site residue. A Zn(2+)-binding site is contributed by Asp101. Glu135 acts as the Proton acceptor in catalysis. Positions 136, 164, and 350 each coordinate Zn(2+).

Belongs to the peptidase M20A family. DapE subfamily. In terms of assembly, homodimer. Requires Zn(2+) as cofactor. Co(2+) serves as cofactor.

The enzyme catalyses N-succinyl-(2S,6S)-2,6-diaminopimelate + H2O = (2S,6S)-2,6-diaminopimelate + succinate. The protein operates within amino-acid biosynthesis; L-lysine biosynthesis via DAP pathway; LL-2,6-diaminopimelate from (S)-tetrahydrodipicolinate (succinylase route): step 3/3. Catalyzes the hydrolysis of N-succinyl-L,L-diaminopimelic acid (SDAP), forming succinate and LL-2,6-diaminopimelate (DAP), an intermediate involved in the bacterial biosynthesis of lysine and meso-diaminopimelic acid, an essential component of bacterial cell walls. In Bordetella parapertussis (strain 12822 / ATCC BAA-587 / NCTC 13253), this protein is Succinyl-diaminopimelate desuccinylase.